The following is a 155-amino-acid chain: SsrA-binding protein (155 aa).

This sequence belongs to the SmpB family.

It localises to the cytoplasm. In terms of biological role, required for rescue of stalled ribosomes mediated by trans-translation. Binds to transfer-messenger RNA (tmRNA), required for stable association of tmRNA with ribosomes. tmRNA and SmpB together mimic tRNA shape, replacing the anticodon stem-loop with SmpB. tmRNA is encoded by the ssrA gene; the 2 termini fold to resemble tRNA(Ala) and it encodes a 'tag peptide', a short internal open reading frame. During trans-translation Ala-aminoacylated tmRNA acts like a tRNA, entering the A-site of stalled ribosomes, displacing the stalled mRNA. The ribosome then switches to translate the ORF on the tmRNA; the nascent peptide is terminated with the 'tag peptide' encoded by the tmRNA and targeted for degradation. The ribosome is freed to recommence translation, which seems to be the essential function of trans-translation. The sequence is that of SsrA-binding protein from Clostridium acetobutylicum (strain ATCC 824 / DSM 792 / JCM 1419 / IAM 19013 / LMG 5710 / NBRC 13948 / NRRL B-527 / VKM B-1787 / 2291 / W).